A 216-amino-acid polypeptide reads, in one-letter code: Probable GTP-binding protein EngB (216 aa).

Residues 27-201 (EGIEVAFAGR…REKLDTWFSE (175 aa)) enclose the EngB-type G domain. GTP-binding positions include 35-42 (GRSNAGKS), 62-66 (GRTQL), 80-83 (DLPG), 147-150 (TKAD), and 180-182 (FSS). Mg(2+)-binding residues include Ser-42 and Thr-64.

It belongs to the TRAFAC class TrmE-Era-EngA-EngB-Septin-like GTPase superfamily. EngB GTPase family. Mg(2+) serves as cofactor.

In terms of biological role, necessary for normal cell division and for the maintenance of normal septation. This is Probable GTP-binding protein EngB from Yersinia pseudotuberculosis serotype O:1b (strain IP 31758).